We begin with the raw amino-acid sequence, 461 residues long: MSSVAKKDKRTMSVTALINRAWPLTPAPHQQQSMPSSQPSNFLQPLATPSTTPSVELDIQWLNIEPGFMSPMSPPEMKPDTAMLDGLRDDSTPPPAFKNYPPNHPLSGSKHLCSICGDRASGKHYGVYSCEGCKGFFKRTVRKDLTYACREDRNCIIDKRQRNRCQYCRYQKCLACGMKREAVQEERQRAARGTEDAHPSSSVQELSIERLLEIESLVADPPEEFQFLRVGPESGVPAKYRAPVSSLCQIGNKQIAALVVWARDIPHFGQLELEDQILLIKNSWNELLLFAIAWRSMEYLTDERENVDSRSTAPPQLMCLMPGMTLHRNSALQAGVGQIFDRVLSELSLKMRTLRMDQAEYVALKAIILLNPDVKGLKNKPEVVVLREKMFSCLDEYVRRSRCAEEGRFAALLLRLPALRSISLKCFEHLYFFHLVADTSIASYIHDALRNHAPSIDTSIL.

The tract at residues 1 to 112 (MSSVAKKDKR…NHPLSGSKHL (112 aa)) is modulating. A disordered region spans residues 26–51 (PAPHQQQSMPSSQPSNFLQPLATPST). Low complexity predominate over residues 27-40 (APHQQQSMPSSQPS). Positions 41–51 (NFLQPLATPST) are enriched in polar residues. NR C4-type zinc fingers lie at residues 113 to 133 (CSICGDRASGKHYGVYSCEGC) and 149 to 173 (CREDRNCIIDKRQRNRCQYCRYQKC). The nuclear receptor DNA-binding region spans 113–185 (CSICGDRASG…CGMKREAVQE (73 aa)). The hinge stretch occupies residues 185 to 192 (EERQRAAR). An NR LBD domain is found at 203–452 (VQELSIERLL…SYIHDALRNH (250 aa)).

Belongs to the nuclear hormone receptor family. NR2 subfamily. In terms of assembly, heterodimer of USP and ECR. Only the heterodimer is capable of high-affinity binding to ecdysone.

It localises to the nucleus. Its function is as follows. Receptor for ecdysone. May be an important modulator of insect metamorphosis. The sequence is that of Protein ultraspiracle homolog (USP) from Manduca sexta (Tobacco hawkmoth).